The sequence spans 290 residues: Inactive tau-tubulin kinase ttbk-6 (290 aa).

Residues 1–240 (MEDHVLKKLN…FWQVMENEKI (240 aa)) enclose the Protein kinase domain. Disordered regions lie at residues 244-263 (SKFD…AAWE) and 268-290 (RYFQ…DFVL).

Belongs to the protein kinase superfamily. CK1 Ser/Thr protein kinase family.

This is Inactive tau-tubulin kinase ttbk-6 from Caenorhabditis elegans.